Reading from the N-terminus, the 143-residue chain is Hemoglobin subunit alpha (143 aa).

Residues 3-143 (KLSGEDKANV…TMRLCISKYR (141 aa)) enclose the Globin domain. Histidine 60 contributes to the O2 binding site. Residue histidine 89 coordinates heme b.

The protein belongs to the globin family. As to quaternary structure, heterotetramer of two alpha chains and two beta chains. As to expression, red blood cells.

Functionally, involved in oxygen transport from the lung to the various peripheral tissues. The polypeptide is Hemoglobin subunit alpha (HBA) (Ambystoma mexicanum (Axolotl)).